The primary structure comprises 30 residues: MMCPRILMKCKHDSDCLPGCVCLEHIEYCG.

Cystine bridges form between C3–C20, C10–C22, and C16–C29.

It belongs to the protease inhibitor I7 (squash-type serine protease inhibitor) family.

Its subcellular location is the secreted. Inhibits trypsin. The chain is Trypsin inhibitor 4 from Cucumis sativus (Cucumber).